We begin with the raw amino-acid sequence, 442 residues long: Putative toxin YopC (442 aa).

The protein in the C-terminal section; belongs to the MbcT/ParT/Res family. As to quaternary structure, forms a complex with cognate antitoxin YopB.

In terms of biological role, may be the toxic component of a type II toxin-antitoxin (TA) system. Neutralized by its cognate antitoxin YopB. The protein is Putative toxin YopC (yopC) of Bacillus subtilis (strain 168).